Here is a 317-residue protein sequence, read N- to C-terminus: Melanocyte-stimulating hormone receptor (317 aa).

Residues 1 to 37 (MAVQGFQRRLLGSLNSTPTAIPQLGLAANQTGARCLE) are Extracellular-facing. Residue asparagine 29 is glycosylated (N-linked (GlcNAc...) asparagine). The chain crosses the membrane as a helical span at residues 38 to 63 (VSIPDGLFLSLGLVSLVENVLVVATI). At 64-72 (AKNRNLHSP) the chain is on the cytoplasmic side. The helical transmembrane segment at 73-93 (TYCFICCLALSDLLVSGGNVL) threads the bilayer. The Extracellular segment spans residues 94–118 (ETVVILLLEASALAARAAVVQPLDN). A helical membrane pass occupies residues 119–140 (VIDVITCSSMVSSLCFLGAIAM). The Cytoplasmic portion of the chain corresponds to 141–163 (DRYVSIFYALRYHSIVTLPRARQ). The chain crosses the membrane as a helical span at residues 164 to 183 (AIAAIWVASVLFSTLFIAYY). Topologically, residues 184–191 (DHAAVLLC) are extracellular. A helical transmembrane segment spans residues 192-211 (LVVFFLAMLVLMAVLYVHML). The Cytoplasmic segment spans residues 212-240 (ARACQHAQGIARLHKRQRPLHQGFGLKGA). A helical membrane pass occupies residues 241 to 266 (VTLTILLGIFFLCWGPFFLHLTLIVL). Residues 267–279 (CPQHPTCSCIFKN) lie on the Extracellular side of the membrane. A helical transmembrane segment spans residues 280–300 (FNLFLTLIICNAIIDPLIYAF). Topologically, residues 301–317 (RRQELRRTLKEGLTCSW) are cytoplasmic. Residue cysteine 315 is the site of S-palmitoyl cysteine attachment.

Belongs to the G-protein coupled receptor 1 family. As to quaternary structure, interacts with MGRN1, but does not undergo MGRN1-mediated ubiquitination; this interaction competes with GNAS-binding and thus inhibits agonist-induced cAMP production. Interacts with OPN3; the interaction results in a decrease in MC1R-mediated cAMP signaling and ultimately a decrease in melanin production in melanocytes.

It is found in the cell membrane. Functionally, receptor for MSH (alpha, beta and gamma) and ACTH. The activity of this receptor is mediated by G proteins which activate adenylate cyclase. Mediates melanogenesis, the production of eumelanin (black/brown) and phaeomelanin (red/yellow), via regulation of cAMP signaling in melanocytes. This chain is Melanocyte-stimulating hormone receptor (MC1R), found in Hylobates lar (Lar gibbon).